The following is a 134-amino-acid chain: Outer membrane lipoprotein RcsF (134 aa).

The N-terminal stretch at 1-15 is a signal peptide; sequence MRALPICLVALMLSG. Residue Cys16 is the site of N-palmitoyl cysteine attachment. Cys16 carries the S-diacylglycerol cysteine lipid modification. Disordered regions lie at residues 22–48 and 67–88; these read SPVE…RATP and GEVS…IPTA. The span at 72 to 82 shows a compositional bias: polar residues; it reads DSCQASNQDSP. Intrachain disulfides connect Cys74/Cys118 and Cys109/Cys124.

It belongs to the RcsF family.

Its subcellular location is the cell outer membrane. Essential component of the Rcs signaling system, which controls transcription of numerous genes. Plays a role in signal transduction from the cell surface to the histidine kinase RcsC. May detect outer membrane defects. This chain is Outer membrane lipoprotein RcsF, found in Escherichia coli O6:H1 (strain CFT073 / ATCC 700928 / UPEC).